Reading from the N-terminus, the 757-residue chain is GTPase-activating protein GYP7 (757 aa).

One can recognise a Rab-GAP TBC domain in the interval glycine 395 to tyrosine 640. Residues glycine 482 to phenylalanine 507 form a disordered region. Positions threonine 498–phenylalanine 507 are enriched in acidic residues.

Functionally, most effectively accelerate the intrinsic GTPase activity of YPT7. It is also active, but to a lesser extent, on YPT31, YPT32 and YPT1. YPT6 and SEC4. This chain is GTPase-activating protein GYP7 (GYP7), found in Debaryomyces hansenii (strain ATCC 36239 / CBS 767 / BCRC 21394 / JCM 1990 / NBRC 0083 / IGC 2968) (Yeast).